A 434-amino-acid polypeptide reads, in one-letter code: 26S proteasome regulatory subunit 6A (434 aa).

At A2 the chain carries N-acetylalanine. Residue Y180 is modified to Phosphotyrosine. Residue 222–229 (GPPGTGKT) participates in ATP binding.

This sequence belongs to the AAA ATPase family. Post-translationally, N-acetylated by NAT1.

It localises to the cytoplasm. The protein resides in the nucleus. Its function is as follows. The 26S proteasome is involved in the ATP-dependent degradation of ubiquitinated proteins. The regulatory (or ATPase) complex confers ATP dependency and substrate specificity to the 26S complex. In Saccharomyces cerevisiae (strain ATCC 204508 / S288c) (Baker's yeast), this protein is 26S proteasome regulatory subunit 6A (RPT5).